The chain runs to 129 residues: Small ribosomal subunit protein uS11 (129 aa).

Belongs to the universal ribosomal protein uS11 family. As to quaternary structure, part of the 30S ribosomal subunit. Interacts with proteins S7 and S18. Binds to IF-3.

In terms of biological role, located on the platform of the 30S subunit, it bridges several disparate RNA helices of the 16S rRNA. Forms part of the Shine-Dalgarno cleft in the 70S ribosome. This is Small ribosomal subunit protein uS11 from Enterococcus faecalis (strain ATCC 700802 / V583).